A 600-amino-acid polypeptide reads, in one-letter code: Chaperone protein DnaK (600 aa).

Thr-175 carries the phosphothreonine; by autocatalysis modification. The segment at 572 to 600 (FAQQTQQQDPNNQKDDVTEATVTDDSTKK) is disordered. Residues 591–600 (ATVTDDSTKK) are compositionally biased toward polar residues.

This sequence belongs to the heat shock protein 70 family.

Its function is as follows. Acts as a chaperone. In Ureaplasma urealyticum serovar 10 (strain ATCC 33699 / Western), this protein is Chaperone protein DnaK.